The chain runs to 4083 residues: Dynein heavy chain, cytoplasmic (4083 aa).

The interval Met-1–Cys-1745 is stem. Coiled-coil stretches lie at residues Asp-127–Val-166, Ile-381–Arg-402, and Lys-801–Ala-821. 4 AAA regions span residues Tyr-1746 to Asn-1967, Ser-2026 to Asp-2265, Ser-2373 to Gly-2622, and Thr-2716 to Gln-2980. ATP contacts are provided by residues Gly-1784–Thr-1791, Gly-2064–Thr-2071, Gly-2412–Thr-2419, and Gly-2754–Thr-2761. Residues Leu-2987 to Thr-3294 are stalk. Coiled coils occupy residues Leu-3015 to Arg-3085, Leu-3223 to Lys-3302, and Leu-3527 to Leu-3607. AAA stretches follow at residues Met-3364 to Lys-3592 and Leu-3748 to His-3952.

It belongs to the dynein heavy chain family. Consists of at least two heavy chains and a number of intermediate and light chains.

Its subcellular location is the cytoplasm. It localises to the cytoskeleton. Functionally, cytoplasmic dynein acts as a motor for the intracellular retrograde motility of vesicles and organelles along microtubules. Dynein has ATPase activity; the force-producing power stroke is thought to occur on release of ADP. Required to maintain uniform nuclear distribution in hyphae. May play an important role in the proper orientation of the mitotic spindle into the budding daughter cell yeast. Probably required for normal progression of the cell cycle. This chain is Dynein heavy chain, cytoplasmic (DYN1), found in Eremothecium gossypii (strain ATCC 10895 / CBS 109.51 / FGSC 9923 / NRRL Y-1056) (Yeast).